Consider the following 161-residue polypeptide: UPF0178 protein BruAb1_1955 (161 aa).

This sequence belongs to the UPF0178 family.

This is UPF0178 protein BruAb1_1955 from Brucella abortus biovar 1 (strain 9-941).